The chain runs to 195 residues: Peptidyl-tRNA hydrolase (195 aa).

Y18 contacts tRNA. Residue H23 is the Proton acceptor of the active site. The tRNA site is built by Y69, N71, and N117.

The protein belongs to the PTH family. In terms of assembly, monomer.

It is found in the cytoplasm. It catalyses the reaction an N-acyl-L-alpha-aminoacyl-tRNA + H2O = an N-acyl-L-amino acid + a tRNA + H(+). Hydrolyzes ribosome-free peptidyl-tRNAs (with 1 or more amino acids incorporated), which drop off the ribosome during protein synthesis, or as a result of ribosome stalling. In terms of biological role, catalyzes the release of premature peptidyl moieties from peptidyl-tRNA molecules trapped in stalled 50S ribosomal subunits, and thus maintains levels of free tRNAs and 50S ribosomes. In Nitrosomonas europaea (strain ATCC 19718 / CIP 103999 / KCTC 2705 / NBRC 14298), this protein is Peptidyl-tRNA hydrolase.